A 175-amino-acid chain; its full sequence is Inorganic pyrophosphatase (175 aa).

3 residues coordinate substrate: lysine 30, arginine 44, and tyrosine 56. Aspartate 66, aspartate 71, and aspartate 103 together coordinate Mg(2+). Tyrosine 142 lines the substrate pocket.

The protein belongs to the PPase family. Homohexamer. The cofactor is Mg(2+).

It localises to the cytoplasm. It carries out the reaction diphosphate + H2O = 2 phosphate + H(+). Functionally, catalyzes the hydrolysis of inorganic pyrophosphate (PPi) forming two phosphate ions. In Pseudomonas aeruginosa (strain ATCC 15692 / DSM 22644 / CIP 104116 / JCM 14847 / LMG 12228 / 1C / PRS 101 / PAO1), this protein is Inorganic pyrophosphatase.